The primary structure comprises 230 residues: Cytidylate kinase (230 aa).

An ATP-binding site is contributed by 12 to 20 (GPSGAGKGT).

The protein belongs to the cytidylate kinase family. Type 1 subfamily.

The protein localises to the cytoplasm. The enzyme catalyses CMP + ATP = CDP + ADP. It carries out the reaction dCMP + ATP = dCDP + ADP. This chain is Cytidylate kinase, found in Yersinia enterocolitica serotype O:8 / biotype 1B (strain NCTC 13174 / 8081).